A 348-amino-acid chain; its full sequence is Protein RecA (348 aa).

66–73 (GPESSGKT) is a binding site for ATP.

It belongs to the RecA family.

It is found in the cytoplasm. Functionally, can catalyze the hydrolysis of ATP in the presence of single-stranded DNA, the ATP-dependent uptake of single-stranded DNA by duplex DNA, and the ATP-dependent hybridization of homologous single-stranded DNAs. It interacts with LexA causing its activation and leading to its autocatalytic cleavage. The protein is Protein RecA of Legionella pneumophila.